The chain runs to 120 residues: Cell cycle protein GpsB (120 aa).

The stretch at 32–68 (LDDIIKDYETYAALVKELREENRRLKEELAAKPVEKA) forms a coiled coil. Positions 63–88 (KPVEKAPVQPTQPVQSTQATQSTVES) are disordered. Residues 68 to 86 (APVQPTQPVQSTQATQSTV) show a composition bias toward low complexity.

Belongs to the GpsB family. In terms of assembly, forms polymers through the coiled coil domains. Interacts with PBP1, MreC and EzrA.

The protein localises to the cytoplasm. Divisome component that associates with the complex late in its assembly, after the Z-ring is formed, and is dependent on DivIC and PBP2B for its recruitment to the divisome. Together with EzrA, is a key component of the system that regulates PBP1 localization during cell cycle progression. Its main role could be the removal of PBP1 from the cell pole after pole maturation is completed. Also contributes to the recruitment of PBP1 to the division complex. Not essential for septum formation. In Streptococcus sanguinis (strain SK36), this protein is Cell cycle protein GpsB.